Reading from the N-terminus, the 101-residue chain is Small ribosomal subunit protein uS10 (101 aa).

The protein belongs to the universal ribosomal protein uS10 family. As to quaternary structure, part of the 30S ribosomal subunit.

Its function is as follows. Involved in the binding of tRNA to the ribosomes. The chain is Small ribosomal subunit protein uS10 from Saccharopolyspora erythraea (strain ATCC 11635 / DSM 40517 / JCM 4748 / NBRC 13426 / NCIMB 8594 / NRRL 2338).